The following is a 322-amino-acid chain: MADKQISLPAKLINGGIAGLIGVTCVFPIDLAKTRLQNQQNGQRMYTSMSDCLIKTIRSEGYFGMYRGAAVNLTLVTPEKAIKLAANDFFRYQLSKDGQQLTLFKEMLAGCGAGTCQVIVTTPMEMLKIQLQDAGRLAAQRKILSAQAQLSGQGSAQPSVEAPATPRPTATQLTRDLLRSRGIAGLYKGLGATLLRDVPFSIVYFPLFANLNELGRPASGEKSPFYVSFLAGCVAGSAAAVAVNPCDVVKTRLQSLQRGINEDTYSGFLDCARKILQNEGPSAFLKGAYCRALVIAPLFGIAQVVYFLGIAETLLGLPRVQP.

Solcar repeat units lie at residues 6-93 (ISLP…FRYQ), 101-214 (LTLF…LNEL), and 223-312 (SPFY…GIAE). A run of 6 helical transmembrane segments spans residues 12 to 32 (LING…IDLA), 62 to 82 (YFGM…EKAI), 107 to 127 (MLAG…MEML), 189 to 209 (GLGA…PLFA), 223 to 243 (SPFY…AVAV), and 292 to 312 (ALVI…GIAE).

This sequence belongs to the mitochondrial carrier (TC 2.A.29) family.

The protein localises to the mitochondrion inner membrane. It carries out the reaction L-glutamate(in) + H(+)(in) = L-glutamate(out) + H(+)(out). Functionally, mitochondrial glutamate/H(+) symporter. Responsible for the transport of glutamate from the cytosol into the mitochondrial matrix with the concomitant import of a proton. Plays a role in the control of glucose-stimulated insulin secretion. The chain is Mitochondrial glutamate carrier 1 (SLC25A22) from Bos taurus (Bovine).